The chain runs to 254 residues: Phosphoglycerate mutase 1 (254 aa).

Substrate-binding positions include R10 to N17 and S23 to G24. H11 (tele-phosphohistidine intermediate) is an active-site residue. Phosphoserine is present on residues S14 and S23. At Y26 the chain carries Phosphotyrosine. S31 is subject to Phosphoserine. Substrate-binding positions include R62, E89–Y92, and K100. The active-site Proton donor/acceptor is E89. K106 carries the post-translational modification N6-acetyllysine. Position 116 to 117 (R116 to R117) interacts with substrate. S118 is modified (phosphoserine). A substrate-binding site is contributed by G187–N188. N6-acetyllysine; alternate is present on K251. An N6-succinyllysine; alternate modification is found at K251. An N6-acetyllysine mark is found at K253 and K254.

This sequence belongs to the phosphoglycerate mutase family. BPG-dependent PGAM subfamily. In terms of assembly, homodimer. Acetylated at Lys-253, Lys-253 and Lys-254 under high glucose condition. Acetylation increases catalytic activity. Under glucose restriction SIRT1 levels dramatically increase and it deacetylates the enzyme.

It catalyses the reaction (2R)-2-phosphoglycerate = (2R)-3-phosphoglycerate. The enzyme catalyses (2R)-3-phospho-glyceroyl phosphate = (2R)-2,3-bisphosphoglycerate + H(+). Its function is as follows. Catalyzes the interconversion of 2-phosphoglycerate and 3-phosphoglyceratea crucial step in glycolysis, by using 2,3-bisphosphoglycerate. Also catalyzes the interconversion of (2R)-2,3-bisphosphoglycerate and (2R)-3-phospho-glyceroyl phosphate. The polypeptide is Phosphoglycerate mutase 1 (Pongo abelii (Sumatran orangutan)).